Here is a 147-residue protein sequence, read N- to C-terminus: FAD synthase (147 aa).

ATP contacts are provided by residues 13-14 (TF), 18-21 (HEGH), Asp100, and Phe127.

Belongs to the archaeal FAD synthase family. In terms of assembly, homodimer. Requires a divalent metal cation as cofactor.

The catalysed reaction is FMN + ATP + H(+) = FAD + diphosphate. The protein operates within cofactor biosynthesis; FAD biosynthesis; FAD from FMN: step 1/1. In terms of biological role, catalyzes the transfer of the AMP portion of ATP to flavin mononucleotide (FMN) to produce flavin adenine dinucleotide (FAD) coenzyme. The sequence is that of FAD synthase from Korarchaeum cryptofilum (strain OPF8).